The following is a 400-amino-acid chain: NADPH dehydrogenase 1 (400 aa).

Residues T38 and Q115 each coordinate FMN. Residues H192 and N195 each coordinate substrate. Y197 serves as the catalytic Proton donor. FMN-binding residues include R244 and R349. Y376 contacts substrate.

Homodimer or heterodimer. The cofactor is FMN.

It carries out the reaction A + NADPH + H(+) = AH2 + NADP(+). Functionally, flavin-dependent enoate reductase that catalyzes the chemo- and stereoslective hydrogenation of electron-poor alkenes. The enzyme is reduced by NADPH, and oxygen, quinones, and alpha,beta-unsaturated aldehydes and ketones can act as electron acceptors to complete catalytic turnover. The physiological oxidant remains elusive. The chain is NADPH dehydrogenase 1 from Saccharomyces pastorianus (Lager yeast).